The sequence spans 87 residues: Putative phytosulfokines 4 (87 aa).

A signal peptide spans 1–23 (MANLSTLITIALLLCATMLTCSA). A propeptide spanning residues 24-77 (RPEPAYFASFTTSPADTLSLEMIESKLHEVAGESCDKEDDEDCLVRRTLTAHLD) is cleaved from the precursor. Y78 and Y80 each carry sulfotyrosine. Residues 83–87 (KNNHH) constitute a propeptide that is removed on maturation.

This sequence belongs to the phytosulfokine family. Sulfation is important for activity and for the binding to a putative membrane receptor.

It is found in the secreted. In terms of biological role, promotes plant cell differentiation, organogenesis and somatic embryogenesis as well as cell proliferation. The sequence is that of Putative phytosulfokines 4 (PSK4) from Arabidopsis thaliana (Mouse-ear cress).